Here is a 1358-residue protein sequence, read N- to C-terminus: DNA-directed RNA polymerase subunit beta (1358 aa).

This sequence belongs to the RNA polymerase beta chain family. As to quaternary structure, the RNAP catalytic core consists of 2 alpha, 1 beta, 1 beta' and 1 omega subunit. When a sigma factor is associated with the core the holoenzyme is formed, which can initiate transcription.

It catalyses the reaction RNA(n) + a ribonucleoside 5'-triphosphate = RNA(n+1) + diphosphate. In terms of biological role, DNA-dependent RNA polymerase catalyzes the transcription of DNA into RNA using the four ribonucleoside triphosphates as substrates. The polypeptide is DNA-directed RNA polymerase subunit beta (Chromohalobacter salexigens (strain ATCC BAA-138 / DSM 3043 / CIP 106854 / NCIMB 13768 / 1H11)).